A 199-amino-acid polypeptide reads, in one-letter code: 3-isopropylmalate dehydratase small subunit (199 aa).

Belongs to the LeuD family. LeuD type 1 subfamily. Heterodimer of LeuC and LeuD.

The catalysed reaction is (2R,3S)-3-isopropylmalate = (2S)-2-isopropylmalate. The protein operates within amino-acid biosynthesis; L-leucine biosynthesis; L-leucine from 3-methyl-2-oxobutanoate: step 2/4. Catalyzes the isomerization between 2-isopropylmalate and 3-isopropylmalate, via the formation of 2-isopropylmaleate. The protein is 3-isopropylmalate dehydratase small subunit of Tolumonas auensis (strain DSM 9187 / NBRC 110442 / TA 4).